Consider the following 207-residue polypeptide: Ras-related protein Rab-8B (207 aa).

GTP contacts are provided by Ser-17, Gly-18, Val-19, Gly-20, Lys-21, Thr-22, Cys-23, Thr-35, Ser-39, and Thr-40. Thr-22 contributes to the Mg(2+) binding site. Short sequence motifs (switch) lie at residues 31-45 (DAFNTTFISTIGIDF) and 63-80 (DTAGQERFRTITTAYYRG). Residues Thr-40 and Asp-63 each contribute to the Mg(2+) site. Gly-66 lines the GTP pocket. Thr-72 carries the post-translational modification Phosphothreonine. GTP is bound by residues Asn-121, Lys-122, Asp-124, Ala-152, and Lys-153. Phosphoserine is present on Ser-180. The residue at position 204 (Cys-204) is a Cysteine methyl ester. A lipid anchor (S-geranylgeranyl cysteine) is attached at Cys-204. The propeptide at 205–207 (LLL) is removed in mature form.

The protein belongs to the small GTPase superfamily. Rab family. As to quaternary structure, associated with actin, delta-catenin and alpha and beta tubulins. Interacts with OTOF. Interacts with PEX5R. Interacts with RAB3IP. Interacts with VIM. Interacts with CDH1. Interacts with MICALL2. Interacts with GDI1, GDI2, CHML and CHM; phosphorylation at Thr-72 disrupts these interactions. Interacts with MICAL1. The cofactor is Mg(2+). In terms of processing, phosphorylation of Thr-72 in the switch II region by LRRK2 prevents the association of RAB regulatory proteins, including CHM, CHML and RAB GDP dissociation inhibitors GDI1 and GDI2.

It is found in the cell membrane. It localises to the cytoplasmic vesicle. The protein localises to the phagosome membrane. Its subcellular location is the endosome membrane. It catalyses the reaction GTP + H2O = GDP + phosphate + H(+). Its activity is regulated as follows. Regulated by guanine nucleotide exchange factors (GEFs) including RAB3IP/RABIN8 which promotes the exchange of bound GDP for free GTP. Regulated by GTPase activating proteins (GAPs) which increase the GTP hydrolysis activity. Inhibited by GDP dissociation inhibitors (GDIs). Its function is as follows. The small GTPases Rab are key regulators of intracellular membrane trafficking, from the formation of transport vesicles to their fusion with membranes. Rabs cycle between an inactive GDP-bound form and an active GTP-bound form that is able to recruit to membranes different sets of downstream effectors directly responsible for vesicle formation, movement, tethering and fusion. RAB8B may be involved in polarized vesicular trafficking and neurotransmitter release. May participate in cell junction dynamics in Sertoli cells. May also participate in the export of a subset of neosynthesized proteins through a Rab8-Rab10-Rab11-dependent endososomal export route. The protein is Ras-related protein Rab-8B (RAB8B) of Pongo abelii (Sumatran orangutan).